The primary structure comprises 321 residues: Glyoxylate/hydroxypyruvate reductase B (321 aa).

Catalysis depends on residues Arg237 and Glu266. His285 serves as the catalytic Proton donor.

It belongs to the D-isomer specific 2-hydroxyacid dehydrogenase family. GhrB subfamily. Homodimer.

Its subcellular location is the cytoplasm. The enzyme catalyses glycolate + NADP(+) = glyoxylate + NADPH + H(+). It catalyses the reaction (R)-glycerate + NAD(+) = 3-hydroxypyruvate + NADH + H(+). The catalysed reaction is (R)-glycerate + NADP(+) = 3-hydroxypyruvate + NADPH + H(+). Catalyzes the NADPH-dependent reduction of glyoxylate and hydroxypyruvate into glycolate and glycerate, respectively. This Erwinia tasmaniensis (strain DSM 17950 / CFBP 7177 / CIP 109463 / NCPPB 4357 / Et1/99) protein is Glyoxylate/hydroxypyruvate reductase B.